Here is a 334-residue protein sequence, read N- to C-terminus: E3 ubiquitin-protein ligase ATL4 (334 aa).

The disordered stretch occupies residues 1–20 (MESLINPSHGGGNYDSHSSS). Residues 28–48 (VLVIILILLMTLLISVSICFL) traverse the membrane as a helical segment. An RING-type; atypical zinc finger spans residues 117–159 (CAVCLSKFEPEDQLRLLPLCCHAFHADCIDIWLVSNQTCPLCR).

It belongs to the RING-type zinc finger family. ATL subfamily.

The protein localises to the membrane. The enzyme catalyses S-ubiquitinyl-[E2 ubiquitin-conjugating enzyme]-L-cysteine + [acceptor protein]-L-lysine = [E2 ubiquitin-conjugating enzyme]-L-cysteine + N(6)-ubiquitinyl-[acceptor protein]-L-lysine.. Its pathway is protein modification; protein ubiquitination. E3 ubiquitin-protein ligase able to catalyze polyubiquitination with ubiquitin-conjugating enzyme E2 UBC8 in vitro. The sequence is that of E3 ubiquitin-protein ligase ATL4 from Arabidopsis thaliana (Mouse-ear cress).